The following is a 124-amino-acid chain: Ribonuclease pancreatic (124 aa).

The span at 1-13 shows a compositional bias: basic and acidic residues; sequence SETAAEKFERQHM. Residues 1-23 are disordered; it reads SETAAEKFERQHMDSYSSSSSNS. Lysine 7 and arginine 10 together coordinate substrate. Histidine 12 acts as the Proton acceptor in catalysis. Cystine bridges form between cysteine 26–cysteine 84, cysteine 40–cysteine 95, cysteine 58–cysteine 110, and cysteine 65–cysteine 72. Substrate contacts are provided by residues 41–45, lysine 66, and arginine 85; that span reads KPVNT. Histidine 119 serves as the catalytic Proton donor.

It belongs to the pancreatic ribonuclease family. As to quaternary structure, monomer. Interacts with and forms tight 1:1 complexes with RNH1. Dimerization of two such complexes may occur. Interaction with RNH1 inhibits this protein. As to expression, pancreas.

Its subcellular location is the secreted. It carries out the reaction an [RNA] containing cytidine + H2O = an [RNA]-3'-cytidine-3'-phosphate + a 5'-hydroxy-ribonucleotide-3'-[RNA].. The catalysed reaction is an [RNA] containing uridine + H2O = an [RNA]-3'-uridine-3'-phosphate + a 5'-hydroxy-ribonucleotide-3'-[RNA].. Functionally, endonuclease that catalyzes the cleavage of RNA on the 3' side of pyrimidine nucleotides. Acts on single-stranded and double-stranded RNA. This Camelus bactrianus (Bactrian camel) protein is Ribonuclease pancreatic (RNASE1).